A 260-amino-acid polypeptide reads, in one-letter code: Chloride intracellular channel Clic (260 aa).

The helical transmembrane segment at 42 to 66 (FCQEYFMDLYLLAELKTISLKVTTV) threads the bilayer.

This sequence belongs to the chloride channel CLIC family. Expressed in cardiac tubes.

The protein localises to the mitochondrion. It localises to the membrane. Its function is as follows. Might insert into membranes and form chloride ion channels. Channel activity depends on the pH. May play a role in ethanol sensitivity. The chain is Chloride intracellular channel Clic from Drosophila melanogaster (Fruit fly).